Consider the following 347-residue polypeptide: Probable 3-hydroxyisobutyrate dehydrogenase, mitochondrial (347 aa).

A mitochondrion-targeting transit peptide spans Met1 to Ser34. NAD(+)-binding positions include Gln38–Asp67, Leu101–Pro102, and Thr134. Residue Lys219 is part of the active site. Lys294 contributes to the NAD(+) binding site.

Belongs to the HIBADH-related family. 3-hydroxyisobutyrate dehydrogenase subfamily.

The protein localises to the mitochondrion. The catalysed reaction is 3-hydroxy-2-methylpropanoate + NAD(+) = 2-methyl-3-oxopropanoate + NADH + H(+). It participates in amino-acid degradation; L-valine degradation. This chain is Probable 3-hydroxyisobutyrate dehydrogenase, mitochondrial, found in Arabidopsis thaliana (Mouse-ear cress).